Consider the following 506-residue polypeptide: Apolipoprotein N-acyltransferase (506 aa).

The next 6 helical transmembrane spans lie at 26–46 (FAPY…LILI), 66–86 (FASG…MPLA), 89–109 (LFLM…FTWS), 113–133 (FFAK…WLIA), 166–186 (GVEL…YAVI), and 192–212 (MLLI…WDWV). The 247-residue stretch at 225-471 (IQGNVDQNLK…TAVLRAELTP (247 aa)) folds into the CN hydrolase domain. The active-site Proton acceptor is the E264. Residue K330 is part of the active site. Residue C382 is the Nucleophile of the active site. Residues 479 to 499 (HQLGSWPLYIWVALSLALAWW) traverse the membrane as a helical segment.

Belongs to the CN hydrolase family. Apolipoprotein N-acyltransferase subfamily.

It is found in the cell inner membrane. It carries out the reaction N-terminal S-1,2-diacyl-sn-glyceryl-L-cysteinyl-[lipoprotein] + a glycerophospholipid = N-acyl-S-1,2-diacyl-sn-glyceryl-L-cysteinyl-[lipoprotein] + a 2-acyl-sn-glycero-3-phospholipid + H(+). The protein operates within protein modification; lipoprotein biosynthesis (N-acyl transfer). Functionally, catalyzes the phospholipid dependent N-acylation of the N-terminal cysteine of apolipoprotein, the last step in lipoprotein maturation. In Vibrio vulnificus (strain CMCP6), this protein is Apolipoprotein N-acyltransferase.